Consider the following 205-residue polypeptide: High frequency lysogenization protein HflD homolog (205 aa).

Belongs to the HflD family.

The protein localises to the cytoplasm. The protein resides in the cell inner membrane. The sequence is that of High frequency lysogenization protein HflD homolog from Shewanella sp. (strain MR-7).